We begin with the raw amino-acid sequence, 435 residues long: NADH-quinone oxidoreductase subunit D (435 aa).

Belongs to the complex I 49 kDa subunit family. As to quaternary structure, NDH-1 is composed of 14 different subunits. Subunits NuoB, C, D, E, F, and G constitute the peripheral sector of the complex.

It localises to the cell inner membrane. The enzyme catalyses a quinone + NADH + 5 H(+)(in) = a quinol + NAD(+) + 4 H(+)(out). Functionally, NDH-1 shuttles electrons from NADH, via FMN and iron-sulfur (Fe-S) centers, to quinones in the respiratory chain. The immediate electron acceptor for the enzyme in this species is believed to be ubiquinone. Couples the redox reaction to proton translocation (for every two electrons transferred, four hydrogen ions are translocated across the cytoplasmic membrane), and thus conserves the redox energy in a proton gradient. In Xylella fastidiosa (strain M23), this protein is NADH-quinone oxidoreductase subunit D.